A 478-amino-acid polypeptide reads, in one-letter code: Sulfate adenylyltransferase subunit 1 (478 aa).

The region spanning 28 to 244 (KTMLRFLTCG…LESVDVVNAS (217 aa)) is the tr-type G domain. The interval 37-44 (GSVDDGKS) is G1. 37–44 (GSVDDGKS) lines the GTP pocket. Positions 95 to 99 (GITID) are G2. A G3 region spans residues 116–119 (DTPG). GTP contacts are provided by residues 116–120 (DTPGH) and 171–174 (NKMD). A G4 region spans residues 171-174 (NKMD). A G5 region spans residues 209–211 (SAL).

This sequence belongs to the TRAFAC class translation factor GTPase superfamily. Classic translation factor GTPase family. CysN/NodQ subfamily. In terms of assembly, heterodimer composed of CysD, the smaller subunit, and CysN.

The catalysed reaction is sulfate + ATP + H(+) = adenosine 5'-phosphosulfate + diphosphate. The protein operates within sulfur metabolism; hydrogen sulfide biosynthesis; sulfite from sulfate: step 1/3. In terms of biological role, with CysD forms the ATP sulfurylase (ATPS) that catalyzes the adenylation of sulfate producing adenosine 5'-phosphosulfate (APS) and diphosphate, the first enzymatic step in sulfur assimilation pathway. APS synthesis involves the formation of a high-energy phosphoric-sulfuric acid anhydride bond driven by GTP hydrolysis by CysN coupled to ATP hydrolysis by CysD. The protein is Sulfate adenylyltransferase subunit 1 of Yersinia enterocolitica serotype O:8 / biotype 1B (strain NCTC 13174 / 8081).